Consider the following 372-residue polypeptide: Mitogen-activated protein kinase spk1 (372 aa).

Over residues 1–25 the composition is skewed to polar residues; that stretch reads MASATSTPTIADGNSNKESVATSRS. A disordered region spans residues 1–29; it reads MASATSTPTIADGNSNKESVATSRSPHTH. A Protein kinase domain is found at 39–327; sequence YEMINLIGQG…AEEALKHPYV (289 aa). Residues 45 to 53 and lysine 68 each bind ATP; that span reads IGQGAYGVV. The active-site Proton acceptor is the aspartate 163. Threonine 199 carries the phosphothreonine modification. Residues 199–201 carry the TXY motif; the sequence is TEY. Position 201 is a phosphotyrosine (tyrosine 201).

This sequence belongs to the protein kinase superfamily. CMGC Ser/Thr protein kinase family. MAP kinase subfamily. The cofactor is Mg(2+). Dually phosphorylated on Thr-199 and Tyr-201, which activates the enzyme.

The protein resides in the nucleus. The catalysed reaction is L-seryl-[protein] + ATP = O-phospho-L-seryl-[protein] + ADP + H(+). It catalyses the reaction L-threonyl-[protein] + ATP = O-phospho-L-threonyl-[protein] + ADP + H(+). Its activity is regulated as follows. Activated by tyrosine and threonine phosphorylation. Involved in mating signal transduction pathway. The sequence is that of Mitogen-activated protein kinase spk1 (spk1) from Schizosaccharomyces pombe (strain 972 / ATCC 24843) (Fission yeast).